We begin with the raw amino-acid sequence, 307 residues long: Homoserine O-acetyltransferase (307 aa).

Residue Cys-142 is the Acyl-thioester intermediate of the active site. 2 residues coordinate substrate: Lys-163 and Ser-192. Catalysis depends on His-235, which acts as the Proton acceptor. Glu-237 is an active-site residue. Substrate is bound at residue Arg-249.

The protein belongs to the MetA family.

The protein resides in the cytoplasm. The catalysed reaction is L-homoserine + acetyl-CoA = O-acetyl-L-homoserine + CoA. The protein operates within amino-acid biosynthesis; L-methionine biosynthesis via de novo pathway; O-acetyl-L-homoserine from L-homoserine: step 1/1. Functionally, transfers an acetyl group from acetyl-CoA to L-homoserine, forming acetyl-L-homoserine. In Rhizobium johnstonii (strain DSM 114642 / LMG 32736 / 3841) (Rhizobium leguminosarum bv. viciae), this protein is Homoserine O-acetyltransferase.